Here is a 344-residue protein sequence, read N- to C-terminus: Laforin, isoform 9 (344 aa).

Disordered regions lie at residues 1 to 44, 58 to 134, 158 to 188, and 320 to 344; these read MHPK…PGPG, GGGA…PRGH, PAPG…RRAS, and SLKK…QCAT. A compositionally biased stretch (low complexity) spans 77–88; the sequence is AARAGALGAARC. Residues 101–131 show a composition bias toward gly residues; it reads RGPGPAGAGPVARGGGAGGRGGGAGRGGAGP. Residues 179-188 are compositionally biased toward basic residues; the sequence is RPRRPRRRAS.

In terms of assembly, interacts with isoform 1 and isoform 2.

The protein resides in the nucleus. In Homo sapiens (Human), this protein is Laforin, isoform 9.